Reading from the N-terminus, the 882-residue chain is Dual specificity tyrosine-phosphorylation-regulated kinase mbk-1 (882 aa).

Positions M1–C42 are enriched in polar residues. Disordered stretches follow at residues M1 to E45, Q62 to F81, K212 to T239, and N255 to D308. The span at Q64–Q79 shows a compositional bias: low complexity. Over residues K220–K231 the composition is skewed to basic and acidic residues. A compositionally biased stretch (low complexity) spans Q290–D308. The 322-residue stretch at I328–L649 folds into the Protein kinase domain. Residues V334 to V342 and K357 contribute to the ATP site. D456 (proton acceptor) is an active-site residue. 2 disordered regions span residues H742–Q761 and Q789–L882. Low complexity-rich tracts occupy residues Q747–Q761 and Q789–Q810. Residues R816–F827 are compositionally biased toward basic and acidic residues. The segment covering S843 to N869 has biased composition (polar residues).

Belongs to the protein kinase superfamily. CMGC Ser/Thr protein kinase family. MNB/DYRK subfamily. The cofactor is Mg(2+). In terms of tissue distribution, expressed in all somatic cells.

Its subcellular location is the nucleus. The catalysed reaction is L-seryl-[protein] + ATP = O-phospho-L-seryl-[protein] + ADP + H(+). It carries out the reaction L-threonyl-[protein] + ATP = O-phospho-L-threonyl-[protein] + ADP + H(+). The enzyme catalyses L-tyrosyl-[protein] + ATP = O-phospho-L-tyrosyl-[protein] + ADP + H(+). Possible role in the function of olfactory neurons. In Caenorhabditis elegans, this protein is Dual specificity tyrosine-phosphorylation-regulated kinase mbk-1.